Here is a 625-residue protein sequence, read N- to C-terminus: Dopamine beta-hydroxylase (625 aa).

Residues 1–9 (MQVPSPSAR) lie on the Cytoplasmic side of the membrane. The helical; Signal-anchor for type II membrane protein transmembrane segment at 10–30 (EAASMYGTAVAVFLVLLVAVL) threads the bilayer. At 31–625 (QGLAPPESPL…TVVNIGGGKV (595 aa)) the chain is on the intragranular side. Positions 50–166 (GDLELSWDVS…GTVHLVYGVL (117 aa)) constitute a DOMON domain. 6 disulfides stabilise this stretch: C147–C604, C224–C275, C261–C287, C382–C495, C386–C573, and C458–C480. N-linked (GlcNAc...) asparagine glycosylation is present at N177. The active site involves Y222. Cu(2+)-binding residues include H254 and H255. N-linked (GlcNAc...) asparagine glycosylation occurs at N315. Cu(2+)-binding residues include H325, H404, H406, and M479. Residue H404 is part of the active site. N574 carries an N-linked (GlcNAc...) asparagine glycan.

The protein belongs to the copper type II ascorbate-dependent monooxygenase family. In terms of assembly, homotetramer; composed of two disulfide-linked dimers. It depends on Cu(2+) as a cofactor. In terms of processing, proteolytic cleavage after the membrane-anchor leads to the release of the soluble form. N-glycosylated.

Its subcellular location is the cytoplasmic vesicle. The protein resides in the secretory vesicle lumen. The protein localises to the secretory vesicle. It localises to the chromaffin granule lumen. It is found in the secreted. Its subcellular location is the secretory vesicle membrane. The protein resides in the chromaffin granule membrane. It carries out the reaction dopamine + 2 L-ascorbate + O2 = (R)-noradrenaline + 2 monodehydro-L-ascorbate radical + H2O. It functions in the pathway catecholamine biosynthesis; (R)-noradrenaline biosynthesis; (R)-noradrenaline from dopamine: step 1/1. Its function is as follows. Catalyzes the hydroxylation of dopamine to noradrenaline (also known as norepinephrine), and is thus vital for regulation of these neurotransmitters. This Canis lupus familiaris (Dog) protein is Dopamine beta-hydroxylase (DBH).